Consider the following 1941-residue polypeptide: Myosin light chain kinase, smooth muscle (1941 aa).

Ig-like C2-type domains follow at residues 33–122 and 156–244; these read PAFI…VELT and PKFA…AELS. Cysteines 177 and 228 form a disulfide. Tyr-226 bears the Phosphotyrosine; by ABL1 mark. A disordered region spans residues 255-329; it reads AVRGTKAPSP…RKVPQSSILQ (75 aa). The segment covering 286–305 has biased composition (polar residues); the sequence is NCPSPQRSGSSARATNSHLK. Ser-295 is modified (phosphoserine). Positions 306 to 320 are enriched in basic and acidic residues; the sequence is SPQEPKPKLCEDAPR. Phosphoserine occurs at positions 333 and 355. 4 consecutive Ig-like C2-type domains span residues 402–485, 502–587, 611–699, and 709–809; these read PRFE…GQVS, PSFS…ATVT, PIFL…AVLT, and PWFI…APPR. 2 disulfides stabilise this stretch: Cys-423–Cys-475 and Cys-523–Cys-571. Tyr-452 carries the phosphotyrosine; by ABL1 and SRC modification. Cysteines 730 and 793 form a disulfide. Tyr-780 carries the post-translational modification Phosphotyrosine; by ABL1. 4 tandem repeats follow at residues 856–883, 884–911, 912–939, and 940–966. A 5 X 28 AA approximate tandem repeats region spans residues 856–985; the sequence is DVRGLLKRRV…KKSPSENGGN (130 aa). Positions 911-951 are actin-binding (calcium/calmodulin-sensitive); that stretch reads MDFRANLQRQVKPKTISEEERKVHSPQQVDFRSVLAKKGTP. Positions 920–1120 are disordered; sequence QVKPKTISEE…KRPESQGSAP (201 aa). Ser-935 is modified (phosphoserine). The segment at 936–951 is calmodulin-binding; it reads PQQVDFRSVLAKKGTP. Residues 967-985 form a 1-5; truncated repeat; it reads DFRSVLGGKKKSPSENGGN. A run of 5 repeats spans residues 990 to 1002, 1003 to 1014, 1015 to 1026, 1027 to 1038, and 1039 to 1049. A 5 X 12 AA approximate tandem repeats region spans residues 990-1049; it reads LNVKAGESPTPAGDAQAIGALKPVGNAKPAETPKPIGNAKPTETLKPVGNTKPAETLKPI. Positions 1048–1482 are actin-binding (calcium/calmodulin-insensitive); sequence PIANAQPSGS…TVTVNTEQKV (435 aa). The span at 1052 to 1065 shows a compositional bias: polar residues; the sequence is AQPSGSLKPVTNAQ. The span at 1085-1099 shows a compositional bias: basic and acidic residues; that stretch reads AGKEEVKEVKNDVNC. The Ig-like C2-type 7 domain maps to 1120–1208; the sequence is PVFKEKLQDV…GQAECSCQVT (89 aa). Cysteines 1141 and 1192 form a disulfide. Residues 1212–1257 are disordered; sequence AQTSENTKAPEMKSRRPKSSLPPVLGTESDATVKKKPAPKTPTKAA. Residues 1260-1348 form the Ig-like C2-type 8 domain; that stretch reads PQIIQFPEDQ…GSRQAQVNLT (89 aa). The 94-residue stretch at 1356 to 1449 folds into the Fibronectin type-III domain; sequence PAGTPCASDI…ESELTAVGEK (94 aa). Residues 1435-1469 form a disordered region; that stretch reads SEPSQESELTAVGEKPEEPKDEVEVSDDDEKEPEV. The span at 1453-1467 shows a compositional bias: acidic residues; it reads PKDEVEVSDDDEKEP. Ser-1460 carries the post-translational modification Phosphoserine. Tyr-1471 carries the phosphotyrosine; by ABL1 modification. The region spanning 1486–1741 is the Protein kinase domain; it reads YDIEERLGSG…CTQCLQHPWL (256 aa). Residues 1492 to 1500 and Lys-1515 contribute to the ATP site; that span reads LGSGKFGQV. Tyr-1597 carries the post-translational modification Phosphotyrosine; by ABL1. Asp-1607 functions as the Proton acceptor in the catalytic mechanism. Tyr-1657 carries the phosphotyrosine; by ABL1 modification. The interval 1733 to 1796 is calmodulin-binding; that stretch reads TQCLQHPWLM…SGLSGRKSST (64 aa). A phosphoserine mark is found at Ser-1781, Ser-1782, Ser-1794, Ser-1795, and Ser-1798. The segment at 1789–1809 is disordered; the sequence is LSGRKSSTGSPTSPINAEKLE. The segment covering 1792–1803 has biased composition (polar residues); that stretch reads RKSSTGSPTSPI. Thr-1800 bears the Phosphothreonine mark. Ser-1801 carries the phosphoserine modification. One can recognise an Ig-like C2-type 9 domain in the interval 1831–1920; it reads PYFSKTIRDL…GEATCTAELI (90 aa). The cysteines at positions 1852 and 1904 are disulfide-linked.

Belongs to the protein kinase superfamily. CAMK Ser/Thr protein kinase family. As to quaternary structure, all isoforms including Telokin bind calmodulin. Interacts with CTTN; this interaction is reduced during thrombin-induced endothelial cell (EC) contraction but is promoted by the barrier-protective agonist sphingosine 1-phosphate (S1P) within lamellipodia. A complex made of ABL1, CTTN and MYLK regulates cortical actin-based cytoskeletal rearrangement critical to sphingosine 1-phosphate (S1P)-mediated endothelial cell (EC) barrier enhancement. Binds to NAA10/ARD1. Interacts with SVIL and PTK2B/PYK2. It depends on Mg(2+) as a cofactor. Ca(2+) is required as a cofactor. Post-translationally, can probably be down-regulated by phosphorylation. Tyrosine phosphorylation by ABL1 increases kinase activity, reverses MLCK-mediated inhibition of Arp2/3-mediated actin polymerization, and enhances CTTN-binding. Phosphorylation by SRC at Tyr-452 promotes CTTN binding. The C-terminus is deglutamylated by AGTPBP1/CCP1, AGBL1/CCP4 and AGBL4/CCP6, leading to the formation of Myosin light chain kinase, smooth muscle, deglutamylated form. The consequences of C-terminal deglutamylation are unknown. Smooth muscle isoform is expressed in all tissues with highest levels in bladder, uterus, vas deferens, colon, ileum, and tracheae. Isoform 1 is expressed in lung, bladder, and vas deferens. Telokin is expressed in smooth muscle cells of the gut, reproductive tract and urinary tract, including in uterus, vas deferens, bladder, colon, kidney, ureter and ovary. Telokin is also detected in the trachea.

It localises to the cytoplasm. It is found in the cell projection. The protein resides in the lamellipodium. Its subcellular location is the cleavage furrow. The protein localises to the cytoskeleton. It localises to the stress fiber. It carries out the reaction L-seryl-[myosin light chain] + ATP = O-phospho-L-seryl-[myosin light chain] + ADP + H(+). It catalyses the reaction L-threonyl-[myosin light chain] + ATP = O-phospho-L-threonyl-[myosin light chain] + ADP + H(+). Its function is as follows. Calcium/calmodulin-dependent myosin light chain kinase implicated in smooth muscle contraction via phosphorylation of myosin light chains (MLC). Also regulates actin-myosin interaction through a non-kinase activity. Phosphorylates PTK2B/PYK2 and myosin light-chains. Involved in the inflammatory response (e.g. apoptosis, vascular permeability, leukocyte diapedesis), cell motility and morphology, airway hyperreactivity and other activities relevant to asthma. Required for tonic airway smooth muscle contraction that is necessary for physiological and asthmatic airway resistance. Necessary for gastrointestinal motility. Implicated in the regulation of endothelial as well as vascular permeability, probably via the regulation of cytoskeletal rearrangements. In the nervous system it has been shown to control the growth initiation of astrocytic processes in culture and to participate in transmitter release at synapses formed between cultured sympathetic ganglion cells. Critical participant in signaling sequences that result in fibroblast apoptosis. Plays a role in the regulation of epithelial cell survival. Required for epithelial wound healing, especially during actomyosin ring contraction during purse-string wound closure. Mediates RhoA-dependent membrane blebbing. Triggers TRPC5 channel activity in a calcium-dependent signaling, by inducing its subcellular localization at the plasma membrane. Promotes cell migration (including tumor cells) and tumor metastasis. PTK2B/PYK2 activation by phosphorylation mediates ITGB2 activation and is thus essential to trigger neutrophil transmigration during acute lung injury (ALI). May regulate optic nerve head astrocyte migration. Probably involved in mitotic cytoskeletal regulation. Regulates tight junction probably by modulating ZO-1 exchange in the perijunctional actomyosin ring. Mediates burn-induced microvascular barrier injury; triggers endothelial contraction in the development of microvascular hyperpermeability by phosphorylating MLC. Essential for intestinal barrier dysfunction. Mediates Giardia spp.-mediated reduced epithelial barrier function during giardiasis intestinal infection via reorganization of cytoskeletal F-actin and tight junctional ZO-1. Necessary for hypotonicity-induced Ca(2+) entry and subsequent activation of volume-sensitive organic osmolyte/anion channels (VSOAC) in cervical cancer cells. The protein is Myosin light chain kinase, smooth muscle of Mus musculus (Mouse).